Reading from the N-terminus, the 129-residue chain is Protein Turandot A (129 aa).

Positions 1-21 (MNSSTALMCFALLLISPLCMG) are cleaved as a signal peptide. An N-linked (GlcNAc...) asparagine glycan is attached at Asn-49.

The protein belongs to the Turandot family. In terms of tissue distribution, expressed in the fat body (at protein level).

Its subcellular location is the secreted. Functionally, a humoral factor that plays a role in stress tolerance; gives increased resistance to the lethal effects of bacterial challenge and stress. Regulated by the JAK/STAT pathway and NF-KB-like Relish pathway in the fat body, upd3 in the hemocytes and Mekk1 in response to septic injury and consequent immune response. This is Protein Turandot A from Drosophila melanogaster (Fruit fly).